The following is a 303-amino-acid chain: Aspartate carbamoyltransferase catalytic subunit (303 aa).

The carbamoyl phosphate site is built by arginine 54 and threonine 55. L-aspartate is bound at residue lysine 83. Carbamoyl phosphate contacts are provided by arginine 104, histidine 132, and glutamine 135. Positions 164 and 226 each coordinate L-aspartate. Carbamoyl phosphate is bound by residues leucine 265 and proline 266.

It belongs to the aspartate/ornithine carbamoyltransferase superfamily. ATCase family. As to quaternary structure, heterooligomer of catalytic and regulatory chains.

The enzyme catalyses carbamoyl phosphate + L-aspartate = N-carbamoyl-L-aspartate + phosphate + H(+). Its pathway is pyrimidine metabolism; UMP biosynthesis via de novo pathway; (S)-dihydroorotate from bicarbonate: step 2/3. In terms of biological role, catalyzes the condensation of carbamoyl phosphate and aspartate to form carbamoyl aspartate and inorganic phosphate, the committed step in the de novo pyrimidine nucleotide biosynthesis pathway. The polypeptide is Aspartate carbamoyltransferase catalytic subunit (Methanocorpusculum labreanum (strain ATCC 43576 / DSM 4855 / Z)).